The sequence spans 63 residues: Large ribosomal subunit protein bL28 (63 aa).

The segment at 1 to 20 (MSKRCAITGKGPMVGNNVSH) is disordered.

Belongs to the bacterial ribosomal protein bL28 family.

This Campylobacter fetus subsp. fetus (strain 82-40) protein is Large ribosomal subunit protein bL28.